A 549-amino-acid polypeptide reads, in one-letter code: Glucose-6-phosphate isomerase (549 aa).

Glu-353 acts as the Proton donor in catalysis. Residues His-384 and Lys-513 contribute to the active site.

The protein belongs to the GPI family.

It is found in the cytoplasm. The catalysed reaction is alpha-D-glucose 6-phosphate = beta-D-fructose 6-phosphate. It functions in the pathway carbohydrate biosynthesis; gluconeogenesis. It participates in carbohydrate degradation; glycolysis; D-glyceraldehyde 3-phosphate and glycerone phosphate from D-glucose: step 2/4. In terms of biological role, catalyzes the reversible isomerization of glucose-6-phosphate to fructose-6-phosphate. This chain is Glucose-6-phosphate isomerase, found in Brucella melitensis biotype 2 (strain ATCC 23457).